The following is a 715-amino-acid chain: ABC transporter F family member 3 (715 aa).

The residue at position 2 (T2) is an N-acetylthreonine. The tract at residues 96-118 is disordered; sequence VRMNDGMDDGPVKKKKPEPVDGP. ABC transporter domains follow at residues 175–436 and 504–713; these read IHMD…KNQQ and ISFS…LLQS. ATP contacts are provided by residues 207-214 and 537-544; these read GRNGTGKT and GPNGIGKS.

This sequence belongs to the ABC transporter superfamily. ABCF family. EF3 (TC 3.A.1.121) subfamily.

In Arabidopsis thaliana (Mouse-ear cress), this protein is ABC transporter F family member 3 (ABCF3).